Reading from the N-terminus, the 210-residue chain is Large ribosomal subunit protein bL17 (210 aa).

The interval Thr177–Asn210 is disordered.

The protein belongs to the bacterial ribosomal protein bL17 family. Part of the 50S ribosomal subunit. Contacts protein L32.

The sequence is that of Large ribosomal subunit protein bL17 from Rhodopirellula baltica (strain DSM 10527 / NCIMB 13988 / SH1).